Consider the following 357-residue polypeptide: 3-dehydroquinate synthase (357 aa).

NAD(+) is bound by residues 104–108 (GVVGD), 128–129 (TT), Lys141, and 168–171 (FLET). Residues Glu183, His243, and His260 each contribute to the Zn(2+) site.

It belongs to the sugar phosphate cyclases superfamily. Dehydroquinate synthase family. The cofactor is NAD(+). Co(2+) serves as cofactor. Requires Zn(2+) as cofactor.

Its subcellular location is the cytoplasm. The catalysed reaction is 7-phospho-2-dehydro-3-deoxy-D-arabino-heptonate = 3-dehydroquinate + phosphate. It functions in the pathway metabolic intermediate biosynthesis; chorismate biosynthesis; chorismate from D-erythrose 4-phosphate and phosphoenolpyruvate: step 2/7. In terms of biological role, catalyzes the conversion of 3-deoxy-D-arabino-heptulosonate 7-phosphate (DAHP) to dehydroquinate (DHQ). This is 3-dehydroquinate synthase from Streptococcus pyogenes serotype M18 (strain MGAS8232).